Reading from the N-terminus, the 61-residue chain is Cobrotoxin-c (61 aa).

Disulfide bonds link Cys-3-Cys-23, Cys-17-Cys-40, Cys-42-Cys-53, and Cys-54-Cys-59.

The protein belongs to the three-finger toxin family. Short-chain subfamily. Type I alpha-neurotoxin sub-subfamily. In terms of tissue distribution, expressed by the venom gland.

The protein localises to the secreted. Functionally, produces peripheral paralysis by blocking neuromuscular transmission at the postsynaptic site. Binds to the nicotinic acetylcholine receptor. This Naja kaouthia (Monocled cobra) protein is Cobrotoxin-c.